The following is a 114-amino-acid chain: Large ribosomal subunit protein bL20 (114 aa).

Belongs to the bacterial ribosomal protein bL20 family.

Binds directly to 23S ribosomal RNA and is necessary for the in vitro assembly process of the 50S ribosomal subunit. It is not involved in the protein synthesizing functions of that subunit. This is Large ribosomal subunit protein bL20 from Flavobacterium johnsoniae (strain ATCC 17061 / DSM 2064 / JCM 8514 / BCRC 14874 / CCUG 350202 / NBRC 14942 / NCIMB 11054 / UW101) (Cytophaga johnsonae).